The primary structure comprises 335 residues: UPF0284 protein TK0853 (335 aa).

It belongs to the UPF0284 family.

This is UPF0284 protein TK0853 from Thermococcus kodakarensis (strain ATCC BAA-918 / JCM 12380 / KOD1) (Pyrococcus kodakaraensis (strain KOD1)).